We begin with the raw amino-acid sequence, 523 residues long: Mitochondrial distribution and morphology protein 34 (523 aa).

Residues M1–L200 form the SMP-LTD domain. The interval E489 to H523 is disordered.

This sequence belongs to the MDM34 family. Component of the ER-mitochondria encounter structure (ERMES) or MDM complex, composed of MMM1, MDM10, MDM12 and MDM34.

The protein resides in the mitochondrion outer membrane. Its function is as follows. Component of the ERMES/MDM complex, which serves as a molecular tether to connect the endoplasmic reticulum (ER) and mitochondria. Components of this complex are involved in the control of mitochondrial shape and protein biogenesis, and function in nonvesicular lipid trafficking between the ER and mitochondria. MDM34 is required for the interaction of the ER-resident membrane protein MMM1 and the outer mitochondrial membrane-resident beta-barrel protein MDM10. This chain is Mitochondrial distribution and morphology protein 34, found in Scheffersomyces stipitis (strain ATCC 58785 / CBS 6054 / NBRC 10063 / NRRL Y-11545) (Yeast).